The primary structure comprises 61 residues: Small ribosomal subunit protein uS14 (61 aa).

Zn(2+)-binding residues include Cys-24, Cys-27, Cys-40, and Cys-43.

The protein belongs to the universal ribosomal protein uS14 family. Zinc-binding uS14 subfamily. Part of the 30S ribosomal subunit. Contacts proteins S3 and S10. Zn(2+) is required as a cofactor.

Binds 16S rRNA, required for the assembly of 30S particles and may also be responsible for determining the conformation of the 16S rRNA at the A site. This is Small ribosomal subunit protein uS14 from Nautilia profundicola (strain ATCC BAA-1463 / DSM 18972 / AmH).